Here is a 184-residue protein sequence, read N- to C-terminus: ATP synthase subunit b, chloroplastic (184 aa).

Residues 27–49 (LATNPINLSVVLGVLIFFGKGVL) traverse the membrane as a helical segment.

Belongs to the ATPase B chain family. As to quaternary structure, F-type ATPases have 2 components, F(1) - the catalytic core - and F(0) - the membrane proton channel. F(1) has five subunits: alpha(3), beta(3), gamma(1), delta(1), epsilon(1). F(0) has four main subunits: a(1), b(1), b'(1) and c(10-14). The alpha and beta chains form an alternating ring which encloses part of the gamma chain. F(1) is attached to F(0) by a central stalk formed by the gamma and epsilon chains, while a peripheral stalk is formed by the delta, b and b' chains.

It localises to the plastid. The protein resides in the chloroplast thylakoid membrane. Functionally, f(1)F(0) ATP synthase produces ATP from ADP in the presence of a proton or sodium gradient. F-type ATPases consist of two structural domains, F(1) containing the extramembraneous catalytic core and F(0) containing the membrane proton channel, linked together by a central stalk and a peripheral stalk. During catalysis, ATP synthesis in the catalytic domain of F(1) is coupled via a rotary mechanism of the central stalk subunits to proton translocation. In terms of biological role, component of the F(0) channel, it forms part of the peripheral stalk, linking F(1) to F(0). The chain is ATP synthase subunit b, chloroplastic from Eucalyptus globulus subsp. globulus (Tasmanian blue gum).